Reading from the N-terminus, the 291-residue chain is Gamma-sarcoglycan (291 aa).

Over 1–37 (MVREQYTTATEGICIERPENQYVYKIGIYGWRKRCLY) the chain is Cytoplasmic. A helical; Signal-anchor for type II membrane protein membrane pass occupies residues 38–58 (LFVLLLLIILVVNLALTIWIL). At 59-291 (KVMWFSPAGM…TCQEHNHICL (233 aa)) the chain is on the extracellular side. A glycan (N-linked (GlcNAc...) asparagine) is linked at N110. Disulfide bonds link C265–C290 and C267–C283.

Belongs to the sarcoglycan beta/delta/gamma/zeta family. Interacts with the syntrophin SNTA1. Cross-link to form 2 major subcomplexes: one consisting of SGCB, SGCD and SGCG and the other consisting of SGCB and SGCD. The association between SGCB and SGCG is particularly strong while SGCA is loosely associated with the other sarcoglycans. Interacts with FLNC. Expressed in skeletal and heart muscle.

It is found in the cell membrane. It localises to the sarcolemma. The protein localises to the cytoplasm. The protein resides in the cytoskeleton. In terms of biological role, component of the sarcoglycan complex, a subcomplex of the dystrophin-glycoprotein complex which forms a link between the F-actin cytoskeleton and the extracellular matrix. The sequence is that of Gamma-sarcoglycan (SGCG) from Homo sapiens (Human).